A 1225-amino-acid chain; its full sequence is ATP-dependent helicase/nuclease subunit A (1225 aa).

One can recognise a UvrD-like helicase ATP-binding domain in the interval 11–478 (AQWTDAQWKS…IDLSKNFRSR (468 aa)). Position 32-39 (32-39 (AAAGSGKT)) interacts with ATP. The 312-residue stretch at 479–790 (KEVLATTNYL…RMMTVHSSKG (312 aa)) folds into the UvrD-like helicase C-terminal domain. Residues 999 to 1014 (EKPSKQSVSELKRQLE) are compositionally biased toward basic and acidic residues. Residues 999–1018 (EKPSKQSVSELKRQLETEES) form a disordered region.

Belongs to the helicase family. AddA subfamily. In terms of assembly, heterodimer of AddA and AddB/RexB. Mg(2+) is required as a cofactor.

It catalyses the reaction Couples ATP hydrolysis with the unwinding of duplex DNA by translocating in the 3'-5' direction.. The enzyme catalyses ATP + H2O = ADP + phosphate + H(+). The heterodimer acts as both an ATP-dependent DNA helicase and an ATP-dependent, dual-direction single-stranded exonuclease. Recognizes the chi site generating a DNA molecule suitable for the initiation of homologous recombination. The AddA nuclease domain is required for chi fragment generation; this subunit has the helicase and 3' -&gt; 5' nuclease activities. This Staphylococcus haemolyticus (strain JCSC1435) protein is ATP-dependent helicase/nuclease subunit A.